The primary structure comprises 84 residues: Small ribosomal subunit protein uS17 (84 aa).

The protein belongs to the universal ribosomal protein uS17 family. Part of the 30S ribosomal subunit.

In terms of biological role, one of the primary rRNA binding proteins, it binds specifically to the 5'-end of 16S ribosomal RNA. This chain is Small ribosomal subunit protein uS17, found in Legionella pneumophila (strain Paris).